We begin with the raw amino-acid sequence, 363 residues long: MSKVNRDEILDILEGYSREDITVATLGSHTSLHILNGAKQEGFKTAVVCEKGREVPYQRFRVADEFIMVDKFSDIVNDDVQDELRSMNSIIVPHGSFVAYAGLDHIENDFYVPMFGNRDILRWESERDLERKLMEEAGIRIPFKYTDPEEIDRTVMVKFPGARGGRGYFVASSTEEFNEKIDSMLERGWITEDDVKDAHIEEYIAGTNFCIHYFYSIMNDEVELMGMDSRFESNIDGLVRIPARDQLDINLDPSYVITGNHPVAMRESLLPQAFDMGDRMVEAASKIVPPGMNGPFCLQTMCTDNLEIVTFEMSARTDGGTNTFMHGSTYSYLLHGEGMSMGRRVAREIRVAAEQDRLPEIIT.

The 5-amino-1-(5-phospho-beta-D-ribosyl)imidazole-4-carboxamide site is built by His-29 and Ser-96. The ATP-grasp domain maps to 118-350 (RDILRWESER…MGRRVAREIR (233 aa)). ATP is bound by residues 148–210 (PEEI…TNFC) and Glu-232. A 5-amino-1-(5-phospho-beta-D-ribosyl)imidazole-4-carboxamide-binding site is contributed by Asn-260. Gln-299 and Glu-312 together coordinate Mg(2+).

The protein belongs to the phosphohexose mutase family. Mg(2+) serves as cofactor. The cofactor is Mn(2+).

The catalysed reaction is 5-amino-1-(5-phospho-beta-D-ribosyl)imidazole-4-carboxamide + formate + ATP = 5-formamido-1-(5-phospho-D-ribosyl)imidazole-4-carboxamide + ADP + phosphate. It functions in the pathway purine metabolism; IMP biosynthesis via de novo pathway; 5-formamido-1-(5-phospho-D-ribosyl)imidazole-4-carboxamide from 5-amino-1-(5-phospho-D-ribosyl)imidazole-4-carboxamide (formate route): step 1/1. Catalyzes the ATP- and formate-dependent formylation of 5-aminoimidazole-4-carboxamide-1-beta-d-ribofuranosyl 5'-monophosphate (AICAR) to 5-formaminoimidazole-4-carboxamide-1-beta-d-ribofuranosyl 5'-monophosphate (FAICAR) in the absence of folates. The chain is 5-formaminoimidazole-4-carboxamide-1-(beta)-D-ribofuranosyl 5'-monophosphate synthetase from Methanothermobacter thermautotrophicus (strain ATCC 29096 / DSM 1053 / JCM 10044 / NBRC 100330 / Delta H) (Methanobacterium thermoautotrophicum).